The primary structure comprises 748 residues: Photosystem I P700 chlorophyll a apoprotein A1 (748 aa).

The next 8 helical transmembrane spans lie at 70 to 93 (VFSA…FHGA), 156 to 179 (LYST…YHYH), 195 to 219 (LNHH…HVSL), 291 to 309 (TAHH…GHQY), 346 to 369 (WHAQ…HHMY), 385 to 411 (LSLF…IFLV), 433 to 455 (AIIS…LYIH), and 530 to 548 (FLVH…LILL). Positions 572 and 581 each coordinate [4Fe-4S] cluster. Helical transmembrane passes span 588-609 (HVFL…HFSW) and 662-684 (LSAY…MFLF). A chlorophyll a'-binding site is contributed by histidine 673. Chlorophyll a is bound by residues methionine 681 and tyrosine 689. A phylloquinone-binding site is contributed by tryptophan 690. A helical membrane pass occupies residues 722–742 (AVGVAHYLLGGIATTWAFFLA).

This sequence belongs to the PsaA/PsaB family. As to quaternary structure, the PsaA/B heterodimer binds the P700 chlorophyll special pair and subsequent electron acceptors. PSI consists of a core antenna complex that captures photons, and an electron transfer chain that converts photonic excitation into a charge separation. The eukaryotic PSI reaction center is composed of at least 11 subunits. Requires P700 is a chlorophyll a/chlorophyll a' dimer, A0 is one or more chlorophyll a, A1 is one or both phylloquinones and FX is a shared 4Fe-4S iron-sulfur center. as cofactor.

The protein resides in the plastid. Its subcellular location is the chloroplast thylakoid membrane. The enzyme catalyses reduced [plastocyanin] + hnu + oxidized [2Fe-2S]-[ferredoxin] = oxidized [plastocyanin] + reduced [2Fe-2S]-[ferredoxin]. PsaA and PsaB bind P700, the primary electron donor of photosystem I (PSI), as well as the electron acceptors A0, A1 and FX. PSI is a plastocyanin-ferredoxin oxidoreductase, converting photonic excitation into a charge separation, which transfers an electron from the donor P700 chlorophyll pair to the spectroscopically characterized acceptors A0, A1, FX, FA and FB in turn. Oxidized P700 is reduced on the lumenal side of the thylakoid membrane by plastocyanin. The sequence is that of Photosystem I P700 chlorophyll a apoprotein A1 from Chaetosphaeridium globosum (Charophycean green alga).